We begin with the raw amino-acid sequence, 837 residues long: Tuftelin-interacting protein 11 (837 aa).

Basic and acidic residues-rich tracts occupy residues 1 to 13 (MSLS…GEGR) and 50 to 64 (TYGV…DERP). Disordered regions lie at residues 1–21 (MSLS…DDER) and 50–136 (TYGV…AGGT). A required for interaction with DHX15 region spans residues 1 to 50 (MSLSHLYRDGEGRVDDDDDERENFEITDWDLQNEFNPNRQRHWQTKEEAT). Residues Ser-2, Ser-59, and Ser-98 each carry the phosphoserine modification. The span at 91–102 (EEAELDDSEDEE) shows a compositional bias: acidic residues. Over residues 103 to 116 (KPGKQEELPKDLGP) the composition is skewed to basic and acidic residues. At Ser-144 the chain carries Phosphoserine. Residues 149–195 (TKGIGQKLLQKMGYVPGRGLGKNAQGIINPIEAKQRKGKGAVGAYGS) enclose the G-patch domain. The disordered stretch occupies residues 183-236 (QRKGKGAVGAYGSERTTQSLQDFPVVDSEEEAEEEFQKELSQWRKDPSGSKKKP). Residue Ser-210 is modified to Phosphoserine. The segment covering 217-231 (EFQKELSQWRKDPSG) has biased composition (basic and acidic residues). Residues 700-705 (VKDKFN) carry the Nuclear localization signal motif. The tract at residues 710-734 (IMNRAVSSNVGAYMQPGARENIAYL) is required for nuclear speckle localization.

Belongs to the TFP11/STIP family. As to quaternary structure, identified in the spliceosome C complex. Found in the Intron Large (IL) complex, a post-mRNA release spliceosomal complex containing the excised intron, U2, U5 and U6 snRNPs, and splicing factors. Interacts with TUFT1. Interacts with DHX15; indicative for a recruitment of DHX15 to the IL complex. Interacts with GCFC2.

The protein localises to the cytoplasm. It localises to the nucleus. Functionally, involved in pre-mRNA splicing, specifically in spliceosome disassembly during late-stage splicing events. Intron turnover seems to proceed through reactions in two lariat-intron associated complexes termed Intron Large (IL) and Intron Small (IS). In cooperation with DHX15 seems to mediate the transition of the U2, U5 and U6 snRNP-containing IL complex to the snRNP-free IS complex leading to efficient debranching and turnover of excised introns. May play a role in the differentiation of ameloblasts and odontoblasts or in the forming of the enamel extracellular matrix. This Oryctolagus cuniculus (Rabbit) protein is Tuftelin-interacting protein 11 (TFIP11).